The sequence spans 497 residues: SPI-2 type 3 secretion system secretin (497 aa).

Residues 1-20 (MVVNKRLILILLFILNTAKS) form the signal peptide.

Belongs to the bacterial secretin family. T3SS SctC subfamily. As to quaternary structure, the core secretion machinery of the T3SS is composed of approximately 20 different proteins, including cytoplasmic components, a base, an export apparatus and a needle. This subunit is part of the base, which anchors the injectisome in the bacterial cell envelope. Forms a stable homooligomeric complex.

Its subcellular location is the cell outer membrane. Functionally, component of the type III secretion system (T3SS), also called injectisome, which is used to inject bacterial effector proteins into eukaryotic host cells. Forms a ring-shaped multimeric structure with an apparent central pore in the outer membrane. Required for secretion of some type III-secreted effectors including the SpvB exotoxin. This is SPI-2 type 3 secretion system secretin from Salmonella typhimurium (strain 14028s / SGSC 2262).